The sequence spans 54 residues: UPF0391 membrane protein msr3702 (54 aa).

2 helical membrane-spanning segments follow: residues 4–24 (WALV…GGIA) and 30–50 (IAQI…LAGL).

This sequence belongs to the UPF0391 family.

Its subcellular location is the cell membrane. The polypeptide is UPF0391 membrane protein msr3702 (Mesorhizobium japonicum (strain LMG 29417 / CECT 9101 / MAFF 303099) (Mesorhizobium loti (strain MAFF 303099))).